We begin with the raw amino-acid sequence, 76 residues long: Protein RALF-like 30 (76 aa).

The signal sequence occupies residues 1–22 (MKAWVICLMVISIFMMIEPTLA). Intrachain disulfides connect Cys37–Cys46 and Cys66–Cys72.

The protein belongs to the plant rapid alkalinization factor (RALF) family.

It localises to the secreted. Its function is as follows. Cell signaling peptide that may regulate plant stress, growth, and development. Mediates a rapid alkalinization of extracellular space by mediating a transient increase in the cytoplasmic Ca(2+) concentration leading to a calcium-dependent signaling events through a cell surface receptor and a concomitant activation of some intracellular mitogen-activated protein kinases. In Arabidopsis thaliana (Mouse-ear cress), this protein is Protein RALF-like 30 (RALFL30).